A 380-amino-acid chain; its full sequence is Palmitoyltransferase ZDHHC18 (380 aa).

Residues M1–R59 are disordered. Topologically, residues M1–H82 are cytoplasmic. S19 bears the Phosphoserine mark. Residues P27–G40 show a composition bias toward pro residues. The helical transmembrane segment at G83–F103 threads the bilayer. Topologically, residues D104 to T111 are lumenal. The helical transmembrane segment at L112–L132 threads the bilayer. Residues Q133–R227 are Cytoplasmic-facing. Positions K184–L234 constitute a DHHC domain. The S-palmitoyl cysteine intermediate role is filled by C214. The chain crosses the membrane as a helical span at residues F228–V248. The Lumenal segment spans residues T249–A269. Residues S270–F290 traverse the membrane as a helical segment. The Cytoplasmic portion of the chain corresponds to H291–P380. Positions A355 to P380 are disordered.

It belongs to the DHHC palmitoyltransferase family. ERF2/ZDHHC9 subfamily. Ubiquitously expressed.

The protein localises to the golgi apparatus membrane. The catalysed reaction is L-cysteinyl-[protein] + hexadecanoyl-CoA = S-hexadecanoyl-L-cysteinyl-[protein] + CoA. In terms of biological role, palmitoyltransferase that catalyzes the addition of palmitate onto various protein substrates, such as CGAS, HRAS and LCK. Palmitoylates HRAS and LCK. Acts as a negative regulator of the cGAS-STING pathway be mediating palmitoylation and inactivation of CGAS. May also have a palmitoyltransferase activity toward the beta-2 adrenergic receptor/ADRB2 and therefore regulate G protein-coupled receptor signaling. The protein is Palmitoyltransferase ZDHHC18 of Mus musculus (Mouse).